Here is a 33-residue protein sequence, read N- to C-terminus: U13-ctenitoxin-Pn1c (33 aa).

Intrachain disulfides connect Cys3–Cys17, Cys10–Cys21, and Cys16–Cys30.

Expressed by the venom gland.

The protein localises to the secreted. In terms of biological role, acts as a neurotoxin. This Phoneutria nigriventer (Brazilian armed spider) protein is U13-ctenitoxin-Pn1c.